Consider the following 523-residue polypeptide: Pentatricopeptide repeat-containing protein At1g52640, mitochondrial (523 aa).

Residues 1-5 constitute a mitochondrion transit peptide; sequence MAIRT. PPR repeat units follow at residues 101-135, 137-171, 172-206, 207-241, 242-276, 277-311, 312-346, 347-381, 382-416, and 417-452; these read SLES…NYFE, SSKV…GIKP, CVDD…GIVP, SAKT…NCVV, DLLA…GLKP, DAYS…DLVP, NVYT…GANP, DTWT…KCLP, DRHT…KFYP, and TVAT…GIPP. Residues 498–523 are disordered; that stretch reads KRRRLGRRSENSEDDDDDFELERDTI. The segment covering 509 to 523 has biased composition (acidic residues); it reads SEDDDDDFELERDTI.

Belongs to the PPR family. P subfamily.

The protein resides in the mitochondrion. This is Pentatricopeptide repeat-containing protein At1g52640, mitochondrial from Arabidopsis thaliana (Mouse-ear cress).